The chain runs to 1030 residues: MKMADAKQKRNEQLKRWIGSETDLEPPVVKRQKTKVKFDDGAVFLAACSSGDTDEVLKLLHRGADINYANVDGLTALHQACIDDNVDMVKFLVENGANINQPDNEGWIPLHAAASCGYLDIAEFLIGQGAHVGAVNSEGDTPLDIAEEEAMEELLQNEVNRQGVDIEAARKEEERIMLRDARQWLNSGHINDVRHAKSGGTALHVAAAKGYTEVLKLLIQAGYDVNIKDYDGWTPLHAAAHWGKEEACRILVDNLCDMEMVNKVGQTAFDVADEDILGYLEELQKKQNLLHSEKRDKKSPLIESTANMDNNQSQKTFKNKETLIIEPEKNASRIESLEQEKVDEEEEGKKDESSCSSEEDEEDDSESEAETDKTKPLASVTNANTSSTQAAPVAVTTPTVSSGQATPTSPIKKFPTTATKISPKEEERKDESPATWRLGLRKTGSYGALAEITASKEGQKEKDTAGVTRSASSPRLSSSLDNKEKEKDSKGTRLAYVAPTIPRRLASTSDIEEKENRDSSSLRTSSSYTRRKWEDDLKKNSSVNEGSTYHKSCSFGRRQDDLISSSVPSTTSTPTVTSAAGLQKSLLSSTSTTTKITTGSSSAGTQSSTSNRLWAEDSTEKEKDSVPTAVTIPVAPTVVNAAASTTTLTTTTAGTVSSTTEVRERRRSYLTPVRDEESESQRKARSRQARQSRRSTQGVTLTDLQEAEKTIGRSRSTRTREQENEEKEKEEKEKQDKEKQEEKKESETSREDEYKQKYSRTYDETYQRYRPVSTSSSTTPSSSLSTMSSSLYASSQLNRPNSLVGITSAYSRGITKENEREGEKREEEKEGEDKSQPKSIRERRRPREKRRSTGVSFWTQDSDENEQEQQSDTEEGSNKKETQTDSISRYETSSTSAGDRYDSLLGRSGSYSYLEERKPYSSRLEKDDSTDFKKLYEQILAENEKLKAQLHDTNMELTDLKLQLEKATQRQERFADRSLLEMEKRERRALERRISEMEEELKMLPDLKADNQRLKDENGALIRVISKLSK.

Residues 35 to 38 (KVKF) carry the KVKF motif motif. ANK repeat units follow at residues 39 to 68 (DDGAVFLAACSSGDTDEVLKLLHRGADINY), 72 to 101 (DGLTALHQACIDDNVDMVKFLVENGANINQ), 105 to 134 (EGWIPLHAAASCGYLDIAEFLIGQGAHVGA), 138 to 164 (EGDTPLDIAEEEAMEELLQNEVNRQGV), 198 to 227 (SGGTALHVAAAKGYTEVLKLLIQAGYDVNI), and 231 to 260 (DGWTPLHAAAHWGKEEACRILVDNLCDMEM). 2 positions are modified to (3S)-3-hydroxyasparagine; by HIF1AN; partial: Asn67 and Asn100. Asn226 is subject to (3S)-3-hydroxyasparagine; by HIF1AN; partial. Disordered stretches follow at residues 290–628 (LHSE…SVPT) and 643–928 (ASTT…EKDD). Residues 291–300 (HSEKRDKKSP) are compositionally biased toward basic and acidic residues. Ser299 carries the phosphoserine modification. Positions 302 to 316 (IESTANMDNNQSQKT) are enriched in polar residues. The segment covering 318-340 (KNKETLIIEPEKNASRIESLEQE) has biased composition (basic and acidic residues). The segment covering 357-369 (SEEDEEDDSESEA) has biased composition (acidic residues). Residues 385–402 (TSSTQAAPVAVTTPTVSS) show a composition bias toward low complexity. Residues Ser422 and Ser432 each carry the phosphoserine modification. Positions 422 to 432 (SPKEEERKDES) are enriched in basic and acidic residues. At Thr443 the chain carries Phosphothreonine. Position 445 is a phosphoserine; by NUAK1 (Ser445). Phosphotyrosine is present on Tyr446. Positions 469 to 480 (RSASSPRLSSSL) are enriched in low complexity. Position 472 is a phosphoserine; by NUAK1 (Ser472). Residue Ser473 is modified to Phosphoserine; by CDK1. The residue at position 477 (Ser477) is a Phosphoserine. Residues 481 to 491 (DNKEKEKDSKG) are compositionally biased toward basic and acidic residues. Phosphoserine occurs at positions 507 and 509. The segment covering 540 to 551 (NSSVNEGSTYHK) has biased composition (polar residues). Over residues 564-610 (SSSVPSTTSTPTVTSAAGLQKSLLSSTSTTTKITTGSSSAGTQSSTS) the composition is skewed to low complexity. Phosphoserine occurs at positions 601 and 618. The segment covering 614–625 (WAEDSTEKEKDS) has biased composition (basic and acidic residues). Residues 643–660 (ASTTTLTTTTAGTVSSTT) show a composition bias toward low complexity. Basic and acidic residues predominate over residues 673 to 682 (VRDEESESQR). The interaction with ROCK2 stretch occupies residues 682–864 (RKARSRQARQ…VSFWTQDSDE (183 aa)). Over residues 683-693 (KARSRQARQSR) the composition is skewed to basic residues. A phosphoserine; by PKA and PKG; in vitro mark is found at Ser692 and Ser695. Thr696 is subject to Phosphothreonine; by ROCK1, ROCK2, CDC42BP, ZIPK/DAPK3 and RAF1. Basic and acidic residues predominate over residues 718 to 767 (RTREQENEEKEKEEKEKQDKEKQEEKKESETSREDEYKQKYSRTYDETYQ). The span at 773-795 (STSSSTTPSSSLSTMSSSLYASS) shows a compositional bias: low complexity. Polar residues predominate over residues 796-810 (QLNRPNSLVGITSAY). The residue at position 802 (Ser802) is a Phosphoserine. The span at 814–840 (ITKENEREGEKREEEKEGEDKSQPKSI) shows a compositional bias: basic and acidic residues. Over residues 841–852 (RERRRPREKRRS) the composition is skewed to basic residues. Residue Ser852 is modified to Phosphoserine; by ROCK2. A compositionally biased stretch (acidic residues) spans 861–875 (DSDENEQEQQSDTEE). Ser862 and Ser871 each carry phosphoserine. Positions 884 to 897 (TDSISRYETSSTSA) are enriched in polar residues. Residues Ser903 and Ser908 each carry the phosphoserine modification. Over residues 903–913 (SLLGRSGSYSY) the composition is skewed to low complexity. Residue Ser910 is modified to Phosphoserine; by NUAK1. A compositionally biased stretch (basic and acidic residues) spans 914-928 (LEERKPYSSRLEKDD). Ser995 is subject to Phosphoserine.

In terms of assembly, PP1 comprises a catalytic subunit, PPP1CA, PPP1CB or PPP1CC, and one or several targeting or regulatory subunits. PPP1R12A mediates binding to myosin. Interacts with ARHA and CIT. Binds PPP1R12B, ROCK1 and IL16. Interacts directly with PRKG1. Non-covalent dimer of 2 dimers; PRKG1-PRKG1 and PPP1R12A-PPP1R12A. Interacts with SMTNL1. Interacts with PPP1CB; the interaction is direct. Interacts (when phosphorylated at Ser-445, Ser-472 and Ser-910) with 14-3-3. Interacts with ROCK1 and ROCK2. Interacts with isoform 1 and isoform 2 of ZIPK/DAPK3. Interacts with RAF1. Interacts with HIF1AN. Interacts with NCKAP1L. In terms of processing, phosphorylated by CIT (Rho-associated kinase). Phosphorylated cooperatively by ROCK1 and CDC42BP on Thr-696. Phosphorylated on upon DNA damage, probably by ATM or ATR. In vitro, phosphorylation of Ser-695 by PKA and PKG appears to prevent phosphorylation of the inhibitory site Thr-696, probably mediated by PRKG1. Phosphorylation at Ser-445, Ser-472 and Ser-910 by NUAK1 promotes interaction with 14-3-3, leading to inhibit interaction with myosin light chain MLC2, preventing dephosphorylation of MLC2. May be phosphorylated at Thr-696 by DMPK; may inhibit the myosin phosphatase activity. Phosphorylated at Ser-473 by CDK1 during mitosis, creating docking sites for the POLO box domains of PLK1. Subsequently, PLK1 binds and phosphorylates PPP1R12A. As to expression, expressed in striated muscles, specifically in type 2a fibers (at protein level).

The protein localises to the cytoplasm. The protein resides in the cytoskeleton. It is found in the stress fiber. Key regulator of protein phosphatase 1C (PPP1C). Mediates binding to myosin. As part of the PPP1C complex, involved in dephosphorylation of PLK1. Capable of inhibiting HIF1AN-dependent suppression of HIF1A activity. The sequence is that of Protein phosphatase 1 regulatory subunit 12A from Homo sapiens (Human).